The sequence spans 359 residues: Peptide chain release factor 1 (359 aa).

Glutamine 235 bears the N5-methylglutamine mark.

This sequence belongs to the prokaryotic/mitochondrial release factor family. Post-translationally, methylated by PrmC. Methylation increases the termination efficiency of RF1.

The protein resides in the cytoplasm. Its function is as follows. Peptide chain release factor 1 directs the termination of translation in response to the peptide chain termination codons UAG and UAA. The sequence is that of Peptide chain release factor 1 from Nitrosomonas eutropha (strain DSM 101675 / C91 / Nm57).